Consider the following 322-residue polypeptide: Ribose-phosphate pyrophosphokinase 1 (322 aa).

Residues Asp-39–Glu-41 and Arg-98–Gln-99 each bind ATP. Residues His-132 and Asp-173 each coordinate Mg(2+). Residue Lys-196 is part of the active site. D-ribose 5-phosphate contacts are provided by residues Arg-198, Asp-224, and Asp-228–Thr-232.

The protein belongs to the ribose-phosphate pyrophosphokinase family. Class I subfamily. In terms of assembly, homohexamer. Mg(2+) serves as cofactor.

The protein resides in the cytoplasm. The enzyme catalyses D-ribose 5-phosphate + ATP = 5-phospho-alpha-D-ribose 1-diphosphate + AMP + H(+). It functions in the pathway metabolic intermediate biosynthesis; 5-phospho-alpha-D-ribose 1-diphosphate biosynthesis; 5-phospho-alpha-D-ribose 1-diphosphate from D-ribose 5-phosphate (route I): step 1/1. Its function is as follows. Involved in the biosynthesis of the central metabolite phospho-alpha-D-ribosyl-1-pyrophosphate (PRPP) via the transfer of pyrophosphoryl group from ATP to 1-hydroxyl of ribose-5-phosphate (Rib-5-P). The polypeptide is Ribose-phosphate pyrophosphokinase 1 (Streptococcus agalactiae serotype III (strain NEM316)).